The primary structure comprises 318 residues: Homoserine kinase (318 aa).

97 to 107 (PIGSGLGSSAC) serves as a coordination point for ATP.

This sequence belongs to the GHMP kinase family. Homoserine kinase subfamily.

Its subcellular location is the cytoplasm. It catalyses the reaction L-homoserine + ATP = O-phospho-L-homoserine + ADP + H(+). It participates in amino-acid biosynthesis; L-threonine biosynthesis; L-threonine from L-aspartate: step 4/5. Functionally, catalyzes the ATP-dependent phosphorylation of L-homoserine to L-homoserine phosphate. This chain is Homoserine kinase, found in Aliivibrio fischeri (strain ATCC 700601 / ES114) (Vibrio fischeri).